The sequence spans 670 residues: Zinc finger and BTB domain-containing protein 5 (670 aa).

The 70-residue stretch at 24-93 (CDCVIVVGNR…MYTSTLMLGE (70 aa)) folds into the BTB domain. Disordered regions lie at residues 158–256 (LSSS…QEDG) and 268–382 (EDAQ…SSTD). Over residues 170–181 (PMSSSMRSSLDQ) the composition is skewed to polar residues. Position 234 is a phosphoserine (serine 234). Lysine 239 participates in a covalent cross-link: Glycyl lysine isopeptide (Lys-Gly) (interchain with G-Cter in SUMO2). The segment covering 285-295 (SRATQVETSFE) has biased composition (polar residues). Glycyl lysine isopeptide (Lys-Gly) (interchain with G-Cter in SUMO2) cross-links involve residues lysine 317 and lysine 325. Positions 345-360 (AEGSESVEVEGVVVSA) are enriched in low complexity. Residues 361-374 (EKIDLSPESSDRSF) are compositionally biased toward basic and acidic residues. Residue serine 366 is modified to Phosphoserine. Glycyl lysine isopeptide (Lys-Gly) (interchain with G-Cter in SUMO2) cross-links involve residues lysine 399 and lysine 410. Over residues 414 to 432 (SNFSASQSTDDNLPNTTSD) the composition is skewed to polar residues. 2 disordered regions span residues 414–433 (SNFS…TSDC) and 442–470 (LLSP…EPAD). A compositionally biased stretch (low complexity) spans 444-459 (SPEAGPAGGPSSAPGS). Residues lysine 535, lysine 587, and lysine 590 each participate in a glycyl lysine isopeptide (Lys-Gly) (interchain with G-Cter in SUMO2) cross-link. The C2H2-type 1 zinc finger occupies 606-628 (YACKICCKTFLTLTDCKKHIRVH). Residues 634 to 657 (YACLKCGKRFSQSSHLYKHSKTTC) form a C2H2-type 2; atypical zinc finger. Glycyl lysine isopeptide (Lys-Gly) (interchain with G-Cter in SUMO2) cross-links involve residues lysine 638 and lysine 651.

The protein localises to the nucleus. In terms of biological role, may be involved in transcriptional regulation. The polypeptide is Zinc finger and BTB domain-containing protein 5 (Zbtb5) (Mus musculus (Mouse)).